The sequence spans 98 residues: HssA/B-like protein 34 (98 aa).

Disordered stretches follow at residues 1–26 and 60–98; these read MTLFSSISSMSSSMTSSRSSIASFGS and AKSSGGSCGGKGGSHNHGHGHGHGPHGHGGKGSGGSCSC. Residues 60–72 are compositionally biased toward gly residues; sequence AKSSGGSCGGKGG. Residues 73-88 show a composition bias toward basic residues; the sequence is SHNHGHGHGHGPHGHG. The segment covering 89 to 98 has biased composition (gly residues); it reads GKGSGGSCSC.

The protein belongs to the hssA/B family.

This is HssA/B-like protein 34 (hssl34) from Dictyostelium discoideum (Social amoeba).